The primary structure comprises 318 residues: L-lactate dehydrogenase (318 aa).

NAD(+)-binding positions include Val-17, Asp-38, Lys-43, Tyr-69, and 83-84; that span reads GA. 2 residues coordinate substrate: Gln-86 and Arg-92. NAD(+) contacts are provided by residues Ser-105, 122-124, and Ser-147; that span reads ATN. Residue 124–127 participates in substrate binding; it reads NPVD. Residue 152–155 participates in substrate binding; that stretch reads DTAR. Residues Lys-157 and His-172 each coordinate beta-D-fructose 1,6-bisphosphate. The active-site Proton acceptor is His-179. Tyr-223 carries the post-translational modification Phosphotyrosine. Thr-232 contributes to the substrate binding site.

Belongs to the LDH/MDH superfamily. LDH family. Homotetramer.

The protein localises to the cytoplasm. It carries out the reaction (S)-lactate + NAD(+) = pyruvate + NADH + H(+). It participates in fermentation; pyruvate fermentation to lactate; (S)-lactate from pyruvate: step 1/1. Allosterically activated by fructose 1,6-bisphosphate (FBP). Functionally, catalyzes the conversion of lactate to pyruvate. This chain is L-lactate dehydrogenase, found in Staphylococcus saprophyticus subsp. saprophyticus (strain ATCC 15305 / DSM 20229 / NCIMB 8711 / NCTC 7292 / S-41).